A 430-amino-acid chain; its full sequence is 5-methylthioadenosine/S-adenosylhomocysteine deaminase (430 aa).

Positions 59 and 61 each coordinate Zn(2+). Residues glutamate 88 and histidine 181 each contribute to the substrate site. Histidine 208 provides a ligand contact to Zn(2+). The substrate site is built by glutamate 211 and aspartate 296. Aspartate 296 provides a ligand contact to Zn(2+).

The protein belongs to the metallo-dependent hydrolases superfamily. MTA/SAH deaminase family. Zn(2+) serves as cofactor.

The catalysed reaction is S-adenosyl-L-homocysteine + H2O + H(+) = S-inosyl-L-homocysteine + NH4(+). The enzyme catalyses S-methyl-5'-thioadenosine + H2O + H(+) = S-methyl-5'-thioinosine + NH4(+). In terms of biological role, catalyzes the deamination of 5-methylthioadenosine and S-adenosyl-L-homocysteine into 5-methylthioinosine and S-inosyl-L-homocysteine, respectively. Is also able to deaminate adenosine. The chain is 5-methylthioadenosine/S-adenosylhomocysteine deaminase from Aquifex aeolicus (strain VF5).